The following is an 842-amino-acid chain: MDFQERDPPFLPESAQSSKPSSAQQASELWEVVEEPRVRLGTEGVMPERQEGHLLKKRKWPLKGWHKRYFVLEDGILHYATTRQDITKGKLHGSIDVRLSVMSINKKAQRIDLDTEDNIYHLKIKSQDLFQSWVAQLRAHRLAHRLDMPRGSLPSTAHRKVPGAQLPTAATASALPGLGPREKVSSWLRDSDGLDRCSHELSECQGKLQELHRLLQSLESLHRIPSAPVIPTHQASVTTERPKKGKRTSRMWCTQSFAKDDTIGRVGRLHGSVPNLSRYLESRDSSGTRGLPPTDYAHLQRSFWALAQKVHSSLSSVLAALTMERDQLRDMHQGSELSRMGVSEASTGQRRLHSLSTSSDTTADSFSSLNPEEQEALYMKGRELTPQLSQTSILSLADSHTEFFDACEVLLSASSSENEGSEEEESCTSEITTSLSEEMLDLRGAERCQKGGCVPGRPMGPPRRRCLPAASGPGADVSLWNILRNNIGKDLSKVSMPVQLNEPLNTLQRLCEELEYSSLLDQASRIADPCERMVYIAAFAVSAYSSTYHRAGCKPFNPVLGETYECERPDRGFRFISEQVSHHPPISACHAESENFAFWQDMKWKNKFWGKSLEIVPVGTVNVSLPRFGDHFEWNKVTSCIHNVLSGQRWIEHYGEVLIRNTQDSSCHCKITFCKAKYWSSNVHEVQGAVLSRSGRVLHRLFGKWHEGLYRGPTPGGQCIWKPNSMPPDHERNFGFTQFALELNELTAELKRSLPSTDTRLRPDQRYLEEGNIQAAEAQKRRIEQLQRDRRKVMEENNIVHQARFFRRQTDSSGKEWWVTNNTYWRLRAEPGYGNMDGAVLW.

The interval 1–28 (MDFQERDPPFLPESAQSSKPSSAQQASE) is disordered. Positions 14-27 (SAQSSKPSSAQQAS) are enriched in low complexity. Residues 47-142 (PERQEGHLLK…WVAQLRAHRL (96 aa)) enclose the PH domain. Phosphothreonine is present on Thr-171. Phosphoserine is present on residues Ser-217, Ser-226, Ser-256, and Ser-272. The disordered stretch occupies residues 330–369 (DMHQGSELSRMGVSEASTGQRRLHSLSTSSDTTADSFSSL). The segment covering 354–369 (SLSTSSDTTADSFSSL) has biased composition (low complexity).

The protein belongs to the OSBP family. In terms of tissue distribution, expressed in epithelium of small and large intestines (at protein level). Expressed in stomach, duodenum, jejunum, ascending colon, spleen, thymus, lymph node, trachea and leukocytes.

Its subcellular location is the cytoplasm. It localises to the cytosol. The protein resides in the endoplasmic reticulum membrane. It is found in the cell membrane. The protein is Oxysterol-binding protein-related protein 7 (OSBPL7) of Homo sapiens (Human).